Consider the following 295-residue polypeptide: MRRLEGSMVAIVTPMKDGAVDLRALRELTEWQLAEGTDGIVPCGTTGEGVTLTPAERADVIRTVIETVRGRALVIAGAGSNATHEAIESVKLAKSLGADAALVVTPYYNKPTQEGLFRHYQAIWEATRFPVVAYNVPSRTSVDLLPETVARLAKAGAIAGIKEATANMDRQVQLVEKVGKDAIAYLSGDDFTVLPYIACGGHGVISVIANVAPRAMKELVVAARSGDLAGALAKQAAMAELNRMMFVETNPGPVKAAVALLGRAGGELRLPLAPVSEASLAKVREAMVRFGLKLA.

Thr-46 is a pyruvate binding site. The Proton donor/acceptor role is filled by Tyr-134. The active-site Schiff-base intermediate with substrate is Lys-162. Ile-205 contributes to the pyruvate binding site.

The protein belongs to the DapA family. Homotetramer; dimer of dimers.

It is found in the cytoplasm. It carries out the reaction L-aspartate 4-semialdehyde + pyruvate = (2S,4S)-4-hydroxy-2,3,4,5-tetrahydrodipicolinate + H2O + H(+). It participates in amino-acid biosynthesis; L-lysine biosynthesis via DAP pathway; (S)-tetrahydrodipicolinate from L-aspartate: step 3/4. In terms of biological role, catalyzes the condensation of (S)-aspartate-beta-semialdehyde [(S)-ASA] and pyruvate to 4-hydroxy-tetrahydrodipicolinate (HTPA). The sequence is that of 4-hydroxy-tetrahydrodipicolinate synthase from Anaeromyxobacter dehalogenans (strain 2CP-C).